An 80-amino-acid polypeptide reads, in one-letter code: Defensin-like protein 291 (80 aa).

Positions 1 to 29 (MAASKTTIFIVFVLCLSCTLLVNISGIQA) are cleaved as a signal peptide. Intrachain disulfides connect C50–C70, C56–C75, and C62–C77.

The protein belongs to the DEFL family.

It is found in the secreted. The protein is Defensin-like protein 291 of Arabidopsis thaliana (Mouse-ear cress).